A 1276-amino-acid polypeptide reads, in one-letter code: Sterol regulatory element-binding protein cleavage-activating protein (1276 aa).

The Cytoplasmic portion of the chain corresponds to 1-18 (MTLTERLREKISQAFYNH). The helical transmembrane segment at 19–39 (GLLCASYPIPIILFTGLCILA) threads the bilayer. The Lumenal portion of the chain corresponds to 40 to 279 (CCYPLLKLPL…NLVHVHFKEE (240 aa)). The tract at residues 46–284 (KLPLPGTGPV…HFKEEIGIAE (239 aa)) is loop-1. The interval 60–81 (PVKDYSPPPVDSDHKQGEPSEQ) is disordered. Asn-263 is a glycosylation site (N-linked (GlcNAc...) asparagine). Residues 280–300 (IGIAELIPLVTTYIILFAYIY) traverse the membrane as a helical segment. Residues 284–442 (ELIPLVTTYI…MFFFTTVLSI (159 aa)) enclose the SSD domain. The Cytoplasmic portion of the chain corresponds to 301 to 312 (FSTRKIDMVKSK). Residues 313 to 333 (WGLALAAVVTVLSSLLMSVGL) traverse the membrane as a helical segment. Topologically, residues 334–344 (CTLFGLTPTLN) are lumenal. A helical transmembrane segment spans residues 345-365 (GGEIFPYLVVVIGLENVLVLT). Residues 366 to 401 (KSVVSTPVDLEVKLRIAQGLSSESWSIMKNVATELG) are Cytoplasmic-facing. The helical transmembrane segment at 402-422 (IILIGYFTLVPAIQEFCLFAV) threads the bilayer. Val-423 is a topological domain (lumenal). A helical transmembrane segment spans residues 424–444 (GLVSDFFLQMFFFTTVLSIDI). At 445-518 (RRMELADLNK…FLARTRLAQR (74 aa)) the chain is on the cytoplasmic side. Positions 447 to 452 (MELADL) match the ER export signal motif. Residues Lys-454 and Lys-466 each participate in a glycyl lysine isopeptide (Lys-Gly) (interchain with G-Cter in ubiquitin) cross-link. A helical membrane pass occupies residues 519–539 (LIMAGTVVWIGILVYTDPAGL). The loop-7 stretch occupies residues 535–710 (DPAGLRTYLA…QAHGDITLYK (176 aa)). Over 540–708 (RTYLAAQVTE…GTQAHGDITL (169 aa)) the chain is Lumenal. N-linked (GlcNAc...) asparagine glycans are attached at residues Asn-590 and Asn-641. The helical transmembrane segment at 709-729 (YKVAALGLAAGIVLVLLLLCL) threads the bilayer. At 730–1276 (YRVLCPRNYG…YVPSVLEKLD (547 aa)) the chain is on the cytoplasmic side. An interaction with SREBF2 region spans residues 731-1276 (RVLCPRNYGQ…YVPSVLEKLD (546 aa)). The stretch at 771-811 (VLRGHLMDIECLASDGMLLVSCCLAGQVCVWDAQTGDCLTR) is one WD 1 repeat. The interval 816-903 (GSRRDSCGGG…RHRAGCGRAR (88 aa)) is disordered. 6 positions are modified to phosphoserine: Ser-821, Ser-837, Ser-843, Ser-850, Ser-905, and Ser-934. The disordered stretch occupies residues 928–957 (PALRPPSPGSPLPQASQEDGAAPEKGSPPL). 2 WD repeats span residues 949-999 (APEK…LCCS) and 1002-1039 (EVSSGITALVFLDRRIVAARLNGSLDFFSLETHTSLSP). Arg-1048 carries the post-translational modification Omega-N-methylarginine. WD repeat units follow at residues 1074–1111 (AHQKPITALRAAAGRLVTGSQDHTLRVFRLEDSCCLFT), 1114–1152 (GHSGAITTVYIDQTMVLASGGQDGAICLWDVLTGSRVSH), 1155–1192 (AHRGDVTSLTCTTSCVISSGLDDLINIWDRSTGIKLYS), and 1194–1232 (QQDLGCGASLGVISDNLLVTGGQGCVSFWDLNYGDLLQT).

It belongs to the WD repeat SCAP family. Membrane region forms a homotetramer. Component of the SCAP-SREBP complex (composed of SCAP and SREBF1/SREBP1 or SREBF2/SREBP2); interacts with SREBF1/SREBP1 or SREBF2/SREBP2 through its C-terminal cytoplasmic domain. Forms a ternary complex with INSIG1 or INSIG2 through its transmembrane domains at high sterol concentrations. Interacts with PAQR3; the interaction anchors the SCAP-SREBP complex to the Golgi apparatus in low cholesterol conditions. Interacts with the SEC23-SEC24 complex in a SAR1-GTP-dependent manner through an ER export signal in its third cytoplasmic loop. Interacts with RNF139; the interaction inhibits the interaction of SCAP with SEC24B and hampering the ER to Golgi transport of the SCAP-SREBP complex. Interacts with SPRING. Ubiquitinated at Lys-454 and Lys-466. RNF145 triggers ubiquitination of SCAP, likely inhibiting SCAP-SREBP complex transport to the Golgi apparatus and the subsequent processing/maturation of SREBF2/SREBP2.

It localises to the endoplasmic reticulum membrane. The protein resides in the golgi apparatus membrane. It is found in the cytoplasmic vesicle. The protein localises to the COPII-coated vesicle membrane. In terms of biological role, escort protein required for cholesterol as well as lipid homeostasis. Regulates export of the SCAP-SREBP complex from the endoplasmic reticulum to the Golgi upon low cholesterol, thereby regulating the processing of sterol regulatory element-binding proteins (SREBPs) SREBF1/SREBP1 and SREBF2/SREBP2. At high sterol concentrations, formation of a ternary complex with INSIG (INSIG1 or INSIG2) leads to mask the ER export signal in SCAP, promoting retention of the complex in the endoplasmic reticulum. Low sterol concentrations trigger release of INSIG, a conformational change in the SSD domain of SCAP, unmasking of the ER export signal, promoting recruitment into COPII-coated vesicles and transport of the SCAP-SREBP to the Golgi: in the Golgi, SREBPs are then processed, releasing the transcription factor fragment of SREBPs from the membrane, its import into the nucleus and up-regulation of LDLR, INSIG1 and the mevalonate pathway. Binds cholesterol via its SSD domain. The chain is Sterol regulatory element-binding protein cleavage-activating protein from Cricetulus griseus (Chinese hamster).